Here is a 328-residue protein sequence, read N- to C-terminus: Phosphate acyltransferase (328 aa).

It belongs to the PlsX family. In terms of assembly, homodimer. Probably interacts with PlsY.

The protein localises to the cytoplasm. The catalysed reaction is a fatty acyl-[ACP] + phosphate = an acyl phosphate + holo-[ACP]. The protein operates within lipid metabolism; phospholipid metabolism. In terms of biological role, catalyzes the reversible formation of acyl-phosphate (acyl-PO(4)) from acyl-[acyl-carrier-protein] (acyl-ACP). This enzyme utilizes acyl-ACP as fatty acyl donor, but not acyl-CoA. In Geobacillus thermodenitrificans (strain NG80-2), this protein is Phosphate acyltransferase.